The chain runs to 433 residues: uncharacterized protein (433 aa).

The signal sequence occupies residues 1–26 (MTRRAEFEMGLFVILQSMFLISLCSS). 8 N-linked (GlcNAc...) asparagine glycosylation sites follow: asparagine 59, asparagine 72, asparagine 125, asparagine 159, asparagine 210, asparagine 275, asparagine 282, and asparagine 323. Alanine 405 carries GPI-anchor amidated alanine lipidation. Residues 406–433 (SSQPRLHDEGVTRLVIFVLSMLLVMLLS) constitute a propeptide, removed in mature form.

The protein localises to the cell membrane. This is an uncharacterized protein from Arabidopsis thaliana (Mouse-ear cress).